The sequence spans 249 residues: Sugar fermentation stimulation protein homolog (249 aa).

Belongs to the SfsA family.

The polypeptide is Sugar fermentation stimulation protein homolog (Synechococcus sp. (strain CC9902)).